The primary structure comprises 515 residues: Protein FAM98A (515 aa).

Disordered regions lie at residues 297–411 (VLMG…YHGG) and 432–515 (SGYQ…HYTS). Over residues 302–311 (VPDRGGRPNE) the composition is skewed to basic and acidic residues. Residues 382-395 (WTDGGSASGGGYQD) show a composition bias toward gly residues. Over residues 444–456 (RYQDGGHHGERGS) the composition is skewed to basic and acidic residues. Residues 457 to 481 (GRGGRGGRGGRGGRGSQGGGWGGRG) are compositionally biased toward gly residues. Low complexity predominate over residues 485–501 (YHQGGQFEQHFQHGGYQ). A compositionally biased stretch (polar residues) spans 502 to 515 (YSHSGFGQGRHYTS).

It belongs to the FAM98 family. As to quaternary structure, interacts (via N- and C-terminus) with DDX1. Interacts (via N- and C-terminus) with C14orf166. Interacts with FAM98B. Interacts with PLEKHM1 (via N- and C-terminus).

In terms of biological role, positively stimulates PRMT1-induced protein arginine methylation. Involved in skeletal homeostasis. Positively regulates lysosome peripheral distribution and ruffled border formation in osteoclasts. The chain is Protein FAM98A from Rattus norvegicus (Rat).